The primary structure comprises 440 residues: 3-phosphoshikimate 1-carboxyvinyltransferase (440 aa).

3-phosphoshikimate is bound by residues K31, S32, and R36. K31 provides a ligand contact to phosphoenolpyruvate. The phosphoenolpyruvate site is built by G104 and R133. Positions 178, 180, 328, and 355 each coordinate 3-phosphoshikimate. A phosphoenolpyruvate-binding site is contributed by Q180. The active-site Proton acceptor is D328. Positions 359 and 401 each coordinate phosphoenolpyruvate.

This sequence belongs to the EPSP synthase family. Monomer.

It is found in the cytoplasm. The enzyme catalyses 3-phosphoshikimate + phosphoenolpyruvate = 5-O-(1-carboxyvinyl)-3-phosphoshikimate + phosphate. It functions in the pathway metabolic intermediate biosynthesis; chorismate biosynthesis; chorismate from D-erythrose 4-phosphate and phosphoenolpyruvate: step 6/7. In terms of biological role, catalyzes the transfer of the enolpyruvyl moiety of phosphoenolpyruvate (PEP) to the 5-hydroxyl of shikimate-3-phosphate (S3P) to produce enolpyruvyl shikimate-3-phosphate and inorganic phosphate. The sequence is that of 3-phosphoshikimate 1-carboxyvinyltransferase from Thermosynechococcus vestitus (strain NIES-2133 / IAM M-273 / BP-1).